Reading from the N-terminus, the 147-residue chain is Large ribosomal subunit protein bL9 (147 aa).

The protein belongs to the bacterial ribosomal protein bL9 family.

In terms of biological role, binds to the 23S rRNA. The chain is Large ribosomal subunit protein bL9 from Sulfurovum sp. (strain NBC37-1).